Reading from the N-terminus, the 599-residue chain is Sulfite reductase [NADPH] flavoprotein alpha-component (599 aa).

Positions isoleucine 64–valine 202 constitute a Flavodoxin-like domain. FMN is bound by residues serine 70–alanine 75, serine 117–glycine 120, and leucine 153–cysteine 162. In terms of domain architecture, FAD-binding FR-type spans aspartate 234–proline 448. Residues threonine 322, alanine 356, arginine 386–serine 389, threonine 404–glycine 406, tyrosine 410, and glycine 419–serine 422 contribute to the FAD site. NADP(+)-binding positions include serine 519–arginine 520, lysine 525–glutamine 529, and aspartate 561. FAD is bound at residue tyrosine 599.

Belongs to the NADPH-dependent sulphite reductase flavoprotein subunit CysJ family. It in the N-terminal section; belongs to the flavodoxin family. This sequence in the C-terminal section; belongs to the flavoprotein pyridine nucleotide cytochrome reductase family. In terms of assembly, alpha(8)-beta(8). The alpha component is a flavoprotein, the beta component is a hemoprotein. FAD is required as a cofactor. Requires FMN as cofactor.

The enzyme catalyses hydrogen sulfide + 3 NADP(+) + 3 H2O = sulfite + 3 NADPH + 4 H(+). It functions in the pathway sulfur metabolism; hydrogen sulfide biosynthesis; hydrogen sulfide from sulfite (NADPH route): step 1/1. In terms of biological role, component of the sulfite reductase complex that catalyzes the 6-electron reduction of sulfite to sulfide. This is one of several activities required for the biosynthesis of L-cysteine from sulfate. The flavoprotein component catalyzes the electron flow from NADPH -&gt; FAD -&gt; FMN to the hemoprotein component. This chain is Sulfite reductase [NADPH] flavoprotein alpha-component, found in Escherichia coli (strain K12).